Consider the following 525-residue polypeptide: Apolipoprotein N-acyltransferase 2 (525 aa).

6 helical membrane passes run 25–45, 56–76, 81–101, 115–135, 153–173, and 200–220; these read ILNF…YYAL, FLYG…LAFF, IFTL…FGFL, FFFA…FLAY, FVDI…AACL, and LIFT…ILSI. Positions 228-486 constitute a CN hydrolase domain; that stretch reads LNTVIVQQNT…AESVYTEVPV (259 aa). The active-site Proton acceptor is the E274. Residue K339 is part of the active site. C397 functions as the Nucleophile in the catalytic mechanism. The helical transmembrane segment at 495–515 threads the bilayer; that stretch reads ASYKDWLPIMMFLILIFNIFL.

It belongs to the CN hydrolase family. Apolipoprotein N-acyltransferase subfamily.

It is found in the cell inner membrane. It carries out the reaction N-terminal S-1,2-diacyl-sn-glyceryl-L-cysteinyl-[lipoprotein] + a glycerophospholipid = N-acyl-S-1,2-diacyl-sn-glyceryl-L-cysteinyl-[lipoprotein] + a 2-acyl-sn-glycero-3-phospholipid + H(+). It functions in the pathway protein modification; lipoprotein biosynthesis (N-acyl transfer). In terms of biological role, catalyzes the phospholipid dependent N-acylation of the N-terminal cysteine of apolipoprotein, the last step in lipoprotein maturation. This chain is Apolipoprotein N-acyltransferase 2, found in Treponema denticola (strain ATCC 35405 / DSM 14222 / CIP 103919 / JCM 8153 / KCTC 15104).